The primary structure comprises 37 residues: Photosystem I reaction center subunit VIII (37 aa).

A helical membrane pass occupies residues 7-27 (LPAIFVPLVGLVFPAIAMVSL).

Belongs to the PsaI family.

Its subcellular location is the plastid. The protein resides in the chloroplast thylakoid membrane. In terms of biological role, may help in the organization of the PsaL subunit. The chain is Photosystem I reaction center subunit VIII from Morus indica (Mulberry).